The following is a 389-amino-acid chain: Alcohol dehydrogenase-like 5 (389 aa).

Zn(2+) contacts are provided by Cys54, Thr56, His77, Cys107, Cys110, Cys113, Cys121, and Cys186. Residues Thr56 and His77 each coordinate an alcohol. Thr56 serves as a coordination point for NAD(+). NAD(+) contacts are provided by residues 211-216 (GLGAVG), Asp235, Lys240, 305-307 (LGI), Phe332, and Arg382.

It belongs to the zinc-containing alcohol dehydrogenase family. Class-III subfamily. As to quaternary structure, homodimer. Zn(2+) is required as a cofactor.

It localises to the cytoplasm. The catalysed reaction is a primary alcohol + NAD(+) = an aldehyde + NADH + H(+). It catalyses the reaction a secondary alcohol + NAD(+) = a ketone + NADH + H(+). The chain is Alcohol dehydrogenase-like 5 from Arabidopsis thaliana (Mouse-ear cress).